The primary structure comprises 749 residues: Phototropin (749 aa).

The PAS 1 domain occupies Pro-7–Gly-80. FMN-binding positions include Asn-56–Gln-61, Arg-74, Asn-89, Asn-99, and Gln-120. S-4a-FMN cysteine is present on Cys-57. In terms of domain architecture, PAC 1 spans Glu-81–Asn-135. One can recognise a PAS 2 domain in the interval Val-200–Gly-273. Residues Ser-274–Val-328 enclose the PAC 2 domain. Positions Phe-404 to Phe-712 constitute a Protein kinase domain. ATP-binding positions include Leu-410–Val-418 and Lys-433. Asp-529 (proton acceptor) is an active-site residue. 2 disordered regions span residues Lys-563–Gly-591 and Pro-729–Tyr-749. The 37-residue stretch at Lys-713–Tyr-749 folds into the AGC-kinase C-terminal domain. Low complexity predominate over residues Lys-734–Tyr-749.

It belongs to the protein kinase superfamily. AGC Ser/Thr protein kinase family. The cofactor is FMN. Post-translationally, autophosphorylated in response to blue light irradiation. 2 molecules of FMN bind covalently to cysteines after exposure to blue light and are reversed in the dark. As to expression, expressed in gametes, pre-gametes and gametes generated by pre-gametes (at protein level).

It is found in the membrane. It catalyses the reaction L-seryl-[protein] + ATP = O-phospho-L-seryl-[protein] + ADP + H(+). The catalysed reaction is L-threonyl-[protein] + ATP = O-phospho-L-threonyl-[protein] + ADP + H(+). In terms of biological role, protein kinase that acts as a blue light photoreceptor. Required for non-photochemical quenching (NPQ), a mechanism that converts and dissipates the harmful excess absorbed light energy into heat and protect the photosynthetic apparatus from photo-oxidative damage. Controls the energy-dependent chlorophyll fluorescence quenching (qE) activity of chlorophyll excited states by inducing the expression of the qE effector protein LHCSR3 in high light intensities. This is Phototropin from Chlamydomonas reinhardtii (Chlamydomonas smithii).